A 448-amino-acid polypeptide reads, in one-letter code: Chromosomal replication initiator protein DnaA (448 aa).

The interval 1-73 (MSTHLTETWE…VNALKLLTSK (73 aa)) is domain I, interacts with DnaA modulators. A domain II region spans residues 73 to 109 (KKYNIDFIVTTEEKIEENEKNHNNEKSNIVVNDEMST). Residues 110 to 326 (MLNPKYTFDS…GALIRIVAFS (217 aa)) form a domain III, AAA+ region region. Residues G154, G156, K157, and T158 each coordinate ATP. The interval 327 to 448 (SLTNKEISVD…NELNKRINQK (122 aa)) is domain IV, binds dsDNA.

This sequence belongs to the DnaA family. In terms of assembly, oligomerizes as a right-handed, spiral filament on DNA at oriC.

Its subcellular location is the cytoplasm. Plays an essential role in the initiation and regulation of chromosomal replication. ATP-DnaA binds to the origin of replication (oriC) to initiate formation of the DNA replication initiation complex once per cell cycle. Binds the DnaA box (a 9 base pair repeat at the origin) and separates the double-stranded (ds)DNA. Forms a right-handed helical filament on oriC DNA; dsDNA binds to the exterior of the filament while single-stranded (ss)DNA is stabiized in the filament's interior. The ATP-DnaA-oriC complex binds and stabilizes one strand of the AT-rich DNA unwinding element (DUE), permitting loading of DNA polymerase. After initiation quickly degrades to an ADP-DnaA complex that is not apt for DNA replication. Binds acidic phospholipids. This chain is Chromosomal replication initiator protein DnaA, found in Clostridium botulinum (strain 657 / Type Ba4).